Reading from the N-terminus, the 165-residue chain is Probable deoxyuridine 5'-triphosphate nucleotidohydrolase (165 aa).

Over residues 39–49 the composition is skewed to basic and acidic residues; sequence GRIDTDGKTIG. A disordered region spans residues 39–64; the sequence is GRIDTDGKTIGDRSPVTPTADEDSTD.

The protein belongs to the dCTP deaminase family. Archaeal dUTPase subfamily.

It carries out the reaction dUTP + H2O = dUMP + diphosphate + H(+). It participates in pyrimidine metabolism; dUMP biosynthesis; dUMP from dCTP (dUTP route): step 2/2. This enzyme is involved in nucleotide metabolism: it produces dUMP, the immediate precursor of thymidine nucleotides and it decreases the intracellular concentration of dUTP so that uracil cannot be incorporated into DNA. This chain is Probable deoxyuridine 5'-triphosphate nucleotidohydrolase, found in Halobacterium salinarum (strain ATCC 29341 / DSM 671 / R1).